The sequence spans 294 residues: Cytidine deaminase (294 aa).

2 CMP/dCMP-type deaminase domains span residues 48–168 (DEDA…FGPK) and 186–294 (VSGD…VLLG). 89 to 91 (NME) serves as a coordination point for substrate. Zn(2+) is bound at residue histidine 102. Glutamate 104 acts as the Proton donor in catalysis. Zn(2+) contacts are provided by cysteine 129 and cysteine 132.

It belongs to the cytidine and deoxycytidylate deaminase family. Homodimer. Zn(2+) is required as a cofactor.

It catalyses the reaction cytidine + H2O + H(+) = uridine + NH4(+). It carries out the reaction 2'-deoxycytidine + H2O + H(+) = 2'-deoxyuridine + NH4(+). This enzyme scavenges exogenous and endogenous cytidine and 2'-deoxycytidine for UMP synthesis. This chain is Cytidine deaminase, found in Klebsiella pneumoniae (strain 342).